The following is a 271-amino-acid chain: Interleukin-1 alpha (271 aa).

Residues 1–112 (MAKVPDMFED…DSEEEIIKPR (112 aa)) constitute a propeptide that is removed on maturation. Lys82 is subject to N6-acetyllysine. The interval 82-86 (KKRRL) is nuclear localization signal (NLS). Ser87 carries the post-translational modification Phosphoserine. Residues Asn102, Asn121, Asn137, Asn141, and Asn211 are each glycosylated (N-linked (GlcNAc...) asparagine).

It belongs to the IL-1 family. Monomer. Interacts with TMED10; the interaction mediates the translocation from the cytoplasm into the ERGIC (endoplasmic reticulum-Golgi intermediate compartment) and thereby secretion. Interacts with IL1R1. Interacts with S100A13; this interaction is the first step in the export of IL1A, followed by direct translocation of this complex across the plasma membrane. Post-translationally, acetylated within its nuclear localization sequence, which impacts subcellular localization. Proteolytic processed by CAPN1 in a calcium-dependent manner. Cleavage from 31 kDa precursor to 18 kDa biologically active molecules. In terms of processing, phosphorylated. Phosphorylation greatly enhances susceptibility to digestion and promotes the conversion of pre-IL1A alpha to the biologically active IL1A.

The protein localises to the nucleus. The protein resides in the cytoplasm. It is found in the secreted. In terms of biological role, cytokine constitutively present intracellularly in nearly all resting non-hematopoietic cells that plays an important role in inflammation and bridges the innate and adaptive immune systems. After binding to its receptor IL1R1 together with its accessory protein IL1RAP, forms the high affinity interleukin-1 receptor complex. Signaling involves the recruitment of adapter molecules such as MYD88, IRAK1 or IRAK4. In turn, mediates the activation of NF-kappa-B and the three MAPK pathways p38, p42/p44 and JNK pathways. Within the cell, acts as an alarmin and cell death results in its liberation in the extracellular space after disruption of the cell membrane to induce inflammation and alert the host to injury or damage. In addition to its role as a danger signal, which occurs when the cytokine is passively released by cell necrosis, directly senses DNA damage and acts as signal for genotoxic stress without loss of cell integrity. In Macaca mulatta (Rhesus macaque), this protein is Interleukin-1 alpha (IL1A).